Here is a 505-residue protein sequence, read N- to C-terminus: Catalase (505 aa).

Residues His58 and Asn131 contribute to the active site. Residue Tyr341 participates in heme binding.

It belongs to the catalase family. It depends on heme as a cofactor.

It catalyses the reaction 2 H2O2 = O2 + 2 H2O. Functionally, decomposes hydrogen peroxide into water and oxygen; serves to protect cells from the toxic effects of hydrogen peroxide. This is Catalase (kat) from Methanosarcina barkeri (strain Fusaro / DSM 804).